A 489-amino-acid polypeptide reads, in one-letter code: UDP-N-acetylmuramate--L-alanine ligase (489 aa).

Gly-128 to Thr-134 contacts ATP.

The protein belongs to the MurCDEF family.

The protein localises to the cytoplasm. It carries out the reaction UDP-N-acetyl-alpha-D-muramate + L-alanine + ATP = UDP-N-acetyl-alpha-D-muramoyl-L-alanine + ADP + phosphate + H(+). It participates in cell wall biogenesis; peptidoglycan biosynthesis. Functionally, cell wall formation. This Shewanella woodyi (strain ATCC 51908 / MS32) protein is UDP-N-acetylmuramate--L-alanine ligase.